Here is an 85-residue protein sequence, read N- to C-terminus: RNA-binding protein Hfq (85 aa).

A Sm domain is found at 10–70; sequence DAFLNQVRKE…ISTIIPQRPV (61 aa).

It belongs to the Hfq family. In terms of assembly, homohexamer.

RNA chaperone that binds small regulatory RNA (sRNAs) and mRNAs to facilitate mRNA translational regulation in response to envelope stress, environmental stress and changes in metabolite concentrations. Also binds with high specificity to tRNAs. The polypeptide is RNA-binding protein Hfq (Carboxydothermus hydrogenoformans (strain ATCC BAA-161 / DSM 6008 / Z-2901)).